Reading from the N-terminus, the 616-residue chain is Putative L-type lectin-domain containing receptor kinase I.10 (616 aa).

A signal peptide spans 1–22 (MAWGLFQILMISFFHLIKLSSQ). The Extracellular portion of the chain corresponds to 23 to 288 (QETSFVYETF…RAEHKNLSPL (266 aa)). The legume-lectin like stretch occupies residues 24–258 (ETSFVYETFR…YQYVLSWSFS (235 aa)). N-linked (GlcNAc...) asparagine glycosylation is found at Asn56, Asn124, Asn181, Asn204, and Asn225. Residues 289 to 309 (FIDLLGFLAIMGLCTLTGMYF) form a helical membrane-spanning segment. Residues 310-616 (FKRGKYAEIT…SAASSATNSP (307 aa)) lie on the Cytoplasmic side of the membrane. The region spanning 343-616 (FHKDGFLGKG…SAASSATNSP (274 aa)) is the Protein kinase domain. ATP-binding positions include 349–357 (LGKGGFGEV) and Lys371. The active-site Proton acceptor is Asp467.

This sequence in the C-terminal section; belongs to the protein kinase superfamily. Ser/Thr protein kinase family. The protein in the N-terminal section; belongs to the leguminous lectin family.

The protein resides in the cell membrane. The catalysed reaction is L-seryl-[protein] + ATP = O-phospho-L-seryl-[protein] + ADP + H(+). It carries out the reaction L-threonyl-[protein] + ATP = O-phospho-L-threonyl-[protein] + ADP + H(+). In Arabidopsis thaliana (Mouse-ear cress), this protein is Putative L-type lectin-domain containing receptor kinase I.10 (LECRK110).